Consider the following 463-residue polypeptide: Golgi-associated PDZ and coiled-coil motif-containing protein (463 aa).

N-acetylserine is present on serine 2. The stretch at 85–201 (AQTVSQINHK…RHIAVLQAEV (117 aa)) forms a coiled coil. Residues 289–372 (KVLLLKEDHE…EIEFEVVYVA (84 aa)) form the PDZ domain. Phosphoserine is present on residues serine 402 and serine 405.

As to quaternary structure, homooligomer. Interacts with FZD5. Interacts with FZD8. Interacts with GRID2 and BECN1. Interacts with CSPG5. Interacts with CLCN3. Interacts with STX6. Interacts with CFTR. Interacts with ASIC3. Interacts with GOLGA3. Interacts with NLGN1. Interacts with RHOQ. Interacts with MARCHF2; the interaction leads to CFTR ubiquitination and degradation. May interact with CACNG2. Interacts with CCDC62. As to expression, ubiquitously expressed (at protein level). Expressed in dorsal root glanglion (DRG), spinal cord and brain. Isoform 1 is preferentially expressed in whole brain (at protein level) and cerebellum. Expressed in spermatocytes and spermatides but not in Sertoli cells and spermatogonia.

Its subcellular location is the cytoplasm. It localises to the golgi apparatus membrane. The protein resides in the golgi apparatus. It is found in the trans-Golgi network membrane. The protein localises to the synapse. Its subcellular location is the postsynaptic density. It localises to the cell projection. The protein resides in the dendrite. Plays a role in intracellular protein trafficking and degradation. May regulate CFTR chloride currents and acid-induced ASIC3 currents by modulating cell surface expression of both channels. May also regulate the intracellular trafficking of the ADR1B receptor. May play a role in autophagy. Together with MARCHF2 mediates the ubiquitination and lysosomal degradation of CFTR. Overexpression results in CFTR intracellular retention and degradation in the lysosomes. The chain is Golgi-associated PDZ and coiled-coil motif-containing protein from Mus musculus (Mouse).